The chain runs to 568 residues: Kinetochore protein NDC80 homolog (568 aa).

The interval M1–D59 is disordered. Basic and acidic residues predominate over residues Q28–D39. A compositionally biased stretch (low complexity) spans A40–S49. 2 coiled-coil regions span residues K241 to A334 and I433 to D469.

Belongs to the NDC80/HEC1 family. As to quaternary structure, component of the NDC80 complex, which consists of NDC80, NUF2, SPC24 and SPC25.

Its subcellular location is the chromosome. The protein resides in the centromere. Acts as a component of the essential kinetochore-associated NDC80 complex, which is required for chromosome segregation and spindle checkpoint activity to ensure proper cell division. The sequence is that of Kinetochore protein NDC80 homolog from Arabidopsis thaliana (Mouse-ear cress).